We begin with the raw amino-acid sequence, 503 residues long: Diels-Alderase cghA (503 aa).

This sequence belongs to the Diels-Alderase family.

It carries out the reaction (2S)-3-[(2S)-3,5-dioxo-4-[(2E,4R,6R,8E,10E,12E)-4,6,12-trimethyltetradeca-2,8,10,12-tetraenoyl]pyrrolidin-2-yl]-2-hydroxy-2-methylpropanoate = sch 210972. It participates in secondary metabolite biosynthesis. Functionally, diels-Alderase; part of the gene cluster that mediates the biosynthesis of the tetramic acid Sch210972, a potential anti-HIV fungal natural product that contains a decalin core. The PKS module of cghG together with the enoylreductase cghC catalyze the formation of the polyketide unit which is then conjugated to 4-hydroxyl-4-methyl glutamate (HMG) by the condensation domain of the cghG NRPS module. One unique structural feature of Sch210972 is the tetramic acid motif proposed to be derived from the non-proteinogenic amino acid HMG, by a Dieckmann-type condensation catalyzed by the reductase domain of cghG. The aldolase cghB catalyzes the aldol condensation of 2 molecules of pyruvic acid to yield the intermediate 4-hydroxyl-4-methyl-2-oxoglutarate (HMOG), which can then be stereoselectively transaminated by an unidentified enzyme to form HMG. The Diels-Alderase cghA then uses the Dieckmann product released by cghG as substrate and catalyzes the Diels-Alder cycloaddition to form the decalin ring of Sch210972. CghA also suppresses the nonenzymatic formation of the alternative stereoisomer. The polypeptide is Diels-Alderase cghA (Chaetomium globosum (strain ATCC 6205 / CBS 148.51 / DSM 1962 / NBRC 6347 / NRRL 1970) (Soil fungus)).